We begin with the raw amino-acid sequence, 230 residues long: Small ribosomal subunit protein uS3c (230 aa).

The region spanning 39-109 (IRSFIHGKLS…QIRVNVVEIS (71 aa)) is the KH type-2 domain.

It belongs to the universal ribosomal protein uS3 family. In terms of assembly, part of the 30S ribosomal subunit.

It is found in the plastid. The protein resides in the chloroplast. The polypeptide is Small ribosomal subunit protein uS3c (rps3) (Porphyra purpurea (Red seaweed)).